The sequence spans 103 residues: MYAVIKTGGKQYRVEEGDVVRIEKIEVATGESVDFDQVLLVANGDDVKVGQPMLDGAKVTAEVLEQGRHKKIKIVKFRRRKHSRKQQGHRQWYTAVKITGIQG.

This sequence belongs to the bacterial ribosomal protein bL21 family. Part of the 50S ribosomal subunit. Contacts protein L20.

Functionally, this protein binds to 23S rRNA in the presence of protein L20. The protein is Large ribosomal subunit protein bL21 of Alcanivorax borkumensis (strain ATCC 700651 / DSM 11573 / NCIMB 13689 / SK2).